Here is a 353-residue protein sequence, read N- to C-terminus: UPF0283 membrane protein YcjF (353 aa).

The segment covering 1–19 (MSEPLKPRIDFAEPLKEEP) has biased composition (basic and acidic residues). A disordered region spans residues 1 to 48 (MSEPLKPRIDFAEPLKEEPTSAFKAQQTFSEAESHTFAPAAIDERPED). At 1-69 (MSEPLKPRID…LRPKRSLWRK (69 aa)) the chain is on the periplasmic side. The helical transmembrane segment at 70–90 (MVMGGLALFGASVVGQGVQWT) threads the bilayer. The Cytoplasmic segment spans residues 91 to 99 (MNAWQTQDW). A helical membrane pass occupies residues 100–120 (VALGGCAAGALIVGAGVGSVV). At 121-212 (TEWWRLWRLR…ARREISRFAA (92 aa)) the chain is on the periplasmic side. Residues 213–233 (ESTLMIAVSPLALVDMAFIAW) form a helical membrane-spanning segment. At 234-353 (RNLRLINRIA…LQKSKSSPEK (120 aa)) the chain is on the cytoplasmic side.

This sequence belongs to the UPF0283 family.

Its subcellular location is the cell inner membrane. This chain is UPF0283 membrane protein YcjF (ycjF), found in Salmonella typhi.